Consider the following 504-residue polypeptide: Cytochrome P450 2D9 (504 aa).

Phosphoserine is present on S249. C446 contributes to the heme binding site.

The protein belongs to the cytochrome P450 family. Heme is required as a cofactor.

Its subcellular location is the endoplasmic reticulum membrane. The protein resides in the microsome membrane. It catalyses the reaction an organic molecule + reduced [NADPH--hemoprotein reductase] + O2 = an alcohol + oxidized [NADPH--hemoprotein reductase] + H2O + H(+). Functionally, cytochromes P450 are a group of heme-thiolate monooxygenases. In liver microsomes, this enzyme is involved in an NADPH-dependent electron transport pathway. It oxidizes a variety of structurally unrelated compounds, including steroids, fatty acids, and xenobiotics. The polypeptide is Cytochrome P450 2D9 (Cyp2d9) (Mus musculus (Mouse)).